The primary structure comprises 321 residues: tRNA-dihydrouridine synthase B (321 aa).

Residues P16–A18 and Q70 contribute to the FMN site. The Proton donor role is filled by C100. FMN-binding positions include K139, N200–D202, and G224–R225.

It belongs to the Dus family. DusB subfamily. FMN is required as a cofactor.

It catalyses the reaction a 5,6-dihydrouridine in tRNA + NAD(+) = a uridine in tRNA + NADH + H(+). It carries out the reaction a 5,6-dihydrouridine in tRNA + NADP(+) = a uridine in tRNA + NADPH + H(+). Functionally, catalyzes the synthesis of 5,6-dihydrouridine (D), a modified base found in the D-loop of most tRNAs, via the reduction of the C5-C6 double bond in target uridines. The polypeptide is tRNA-dihydrouridine synthase B (Pectobacterium carotovorum (Erwinia carotovora)).